Here is a 332-residue protein sequence, read N- to C-terminus: Glyceraldehyde-3-phosphate dehydrogenase (332 aa).

NAD(+) is bound by residues 10–11 (RI), Asp-32, and Met-77. D-glyceraldehyde 3-phosphate is bound by residues 148–150 (SCT), Thr-179, 208–209 (TG), and Arg-231. Cys-149 (nucleophile) is an active-site residue. Asn-313 serves as a coordination point for NAD(+).

The protein belongs to the glyceraldehyde-3-phosphate dehydrogenase family. In terms of assembly, homotetramer.

The protein localises to the cytoplasm. The catalysed reaction is D-glyceraldehyde 3-phosphate + phosphate + NAD(+) = (2R)-3-phospho-glyceroyl phosphate + NADH + H(+). It functions in the pathway carbohydrate degradation; glycolysis; pyruvate from D-glyceraldehyde 3-phosphate: step 1/5. The protein is Glyceraldehyde-3-phosphate dehydrogenase (GPDA) of Phytophthora infestans (Potato late blight agent).